A 284-amino-acid chain; its full sequence is Short chain dehydrogenase/reductase AacuD (284 aa).

Val-37 contacts NADP(+). Residues Ser-166 and Tyr-180 each act as proton donor in the active site. Residues Tyr-180, Lys-184, and Thr-215 each coordinate NADP(+). Lys-184 functions as the Lowers pKa of active site Tyr in the catalytic mechanism.

Belongs to the short-chain dehydrogenases/reductases (SDR) family.

Its pathway is secondary metabolite biosynthesis. Short chain dehydrogenase/reductase; part of the gene cluster that mediates the biosynthesis of the tetrahydroxanthone dimer secalonic acid D. The pathway begins with the synthesis of atrochrysone thioester by the polyketide synthase AacuL. The atrochrysone carboxyl ACP thioesterase AacuM then breaks the thioester bond and releases the atrochrysone carboxylic acid from AacuL. Atrochrysone carboxylic acid is decarboxylated by the decarboxylase AacuI, and oxidized by the anthrone oxygenase AacuG to yield emodin. Emodin is then reduced to emodin hydroquinone by a yet unidentified oxidoreductase. A-ring reduction by the short chain dehydrogenase AacuN, dehydration by the scytalone dehydratase-like protein AacuK and probable spontaneous re-oxidation, results in overall deoxygenation to chrysophanol. Baeyer-Villiger oxidation by the Baeyer-Villiger monooxygenase (BVMO) AacuH then yields monodictyphenone. Monodictyphenone is transformed into compounds with the tetrahydroxanthone skeleton via methylesterification by the methyltransferase AacuQ, followed by the action of the flavin-dependent monooxygenase AacuC, the isomerase AacuP, and the short chain dehydrogenase/reductase AacuF or AacuD. AacuF and AacuD should accept the same compound as a substrate but perform the ketoreduction with a different stereoselectivity, thus yielding blennolides B and A, respectively. In the final step of the biosynthesis, the cytochrome P450 monooxygenase AacuE accepts blennolide B and/or blennolide A to conduct the dimerization reaction to furnish the tetrahydroxanthone dimers, secalonic acids D, B, and F. This Aspergillus aculeatus (strain ATCC 16872 / CBS 172.66 / WB 5094) protein is Short chain dehydrogenase/reductase AacuD.